Consider the following 593-residue polypeptide: Methionine--tRNA ligase (593 aa).

The 'HIGH' region motif lies at 7–17 (PYANGPRHIGH). Zn(2+)-binding residues include Cys139, Cys142, Cys152, and Cys155. A 'KMSKS' region motif is present at residues 343–347 (KFSTS). Thr346 is a binding site for ATP.

This sequence belongs to the class-I aminoacyl-tRNA synthetase family. MetG type 1 subfamily. As to quaternary structure, monomer. Zn(2+) serves as cofactor.

It is found in the cytoplasm. It catalyses the reaction tRNA(Met) + L-methionine + ATP = L-methionyl-tRNA(Met) + AMP + diphosphate. In terms of biological role, is required not only for elongation of protein synthesis but also for the initiation of all mRNA translation through initiator tRNA(fMet) aminoacylation. This is Methionine--tRNA ligase from Saccharopolyspora erythraea (strain ATCC 11635 / DSM 40517 / JCM 4748 / NBRC 13426 / NCIMB 8594 / NRRL 2338).